The primary structure comprises 307 residues: MARRRRGTPIDGVLLLDKAPGVSSNRALQQVRRLYDAQKAGHTGTLDPMATGLLPVCFGEATKFSAYLLDADKTYRTWVRLGEVTDTGDAEGTVIEHHSVPALDERDIEAALAGFRGEVEQVPPMYSALKHQGRPLYELAREGKHVERAARRVTVYDMRLLSCEAEGFELEVRCSKGTYIRTLAEDIGHALGCGAHITSLRRLRSGPFEADAMHAFSALEDLDAASREARLLPVDTMLTHLPSLEVAASASRRLLHGQRAQIDTAGLAAQSTARLYRDAAFLGLVTVTECGEVAPRRLLNTASLASE.

Asp47 acts as the Nucleophile in catalysis.

Belongs to the pseudouridine synthase TruB family. Type 1 subfamily.

It carries out the reaction uridine(55) in tRNA = pseudouridine(55) in tRNA. Functionally, responsible for synthesis of pseudouridine from uracil-55 in the psi GC loop of transfer RNAs. The protein is tRNA pseudouridine synthase B of Chromohalobacter salexigens (strain ATCC BAA-138 / DSM 3043 / CIP 106854 / NCIMB 13768 / 1H11).